We begin with the raw amino-acid sequence, 189 residues long: 3-isopropylmalate dehydratase small subunit (189 aa).

Belongs to the LeuD family. LeuD type 1 subfamily. As to quaternary structure, heterodimer of LeuC and LeuD.

It carries out the reaction (2R,3S)-3-isopropylmalate = (2S)-2-isopropylmalate. It participates in amino-acid biosynthesis; L-leucine biosynthesis; L-leucine from 3-methyl-2-oxobutanoate: step 2/4. Its function is as follows. Catalyzes the isomerization between 2-isopropylmalate and 3-isopropylmalate, via the formation of 2-isopropylmaleate. In Francisella tularensis subsp. holarctica (strain FTNF002-00 / FTA), this protein is 3-isopropylmalate dehydratase small subunit.